Here is a 382-residue protein sequence, read N- to C-terminus: SAT4 family membrane protein (382 aa).

The tract at residues 1–22 (MFGAELVGRETGGQSTDQPYSY) is disordered. An N-linked (GlcNAc...) asparagine glycan is attached at N78. The next 2 helical transmembrane spans lie at 80–100 (SQIL…LLYL) and 112–132 (YLSI…NFFL). The N-linked (GlcNAc...) asparagine glycan is linked to N147. 3 consecutive transmembrane segments (helical) span residues 159 to 179 (ILVT…LPII), 192 to 212 (LGIS…IMRL), and 228 to 248 (WYTE…PTFF). N-linked (GlcNAc...) asparagine glycosylation occurs at N269.

The protein belongs to the SAT4 family.

The protein localises to the membrane. This is SAT4 family membrane protein from Emericella nidulans (strain FGSC A4 / ATCC 38163 / CBS 112.46 / NRRL 194 / M139) (Aspergillus nidulans).